The primary structure comprises 492 residues: KRAB-A domain-containing protein 2 (492 aa).

One can recognise a KRAB domain in the interval 36–117 (LFQEATAFEN…MREKFLMSVT (82 aa)). S115 bears the Phosphoserine mark. T117 carries the phosphothreonine modification. One can recognise an Integrase catalytic domain in the interval 247 to 415 (RGLAPKPMTF…SPFEAMFGYK (169 aa)). Positions 427–457 (RETVATLQTEEELEIAEEQLENSLWIRQEER) form a coiled coil. The segment covering 455–465 (EERAEIGADRS) has biased composition (basic and acidic residues). The segment at 455–492 (EERAEIGADRSDMDDDMDPTPEASEPSTSQGTSGLLCW) is disordered. The span at 479–492 (EPSTSQGTSGLLCW) shows a compositional bias: polar residues.

The protein is KRAB-A domain-containing protein 2 (KRBA2) of Homo sapiens (Human).